A 106-amino-acid chain; its full sequence is UPF0145 protein APL_0465 (106 aa).

The protein belongs to the UPF0145 family.

The protein is UPF0145 protein APL_0465 of Actinobacillus pleuropneumoniae serotype 5b (strain L20).